We begin with the raw amino-acid sequence, 282 residues long: HTH-type transcriptional activator RhaR (282 aa).

The region spanning 179-277 is the HTH araC/xylS-type domain; the sequence is DKLITALANS…GMTPSQWRHL (99 aa). DNA-binding regions (H-T-H motif) lie at residues 196-217 and 244-267; these read DAFC…RAQT and ISEI…TRET.

Binds DNA as a dimer.

It localises to the cytoplasm. Activates expression of the rhaSR operon in response to L-rhamnose. The chain is HTH-type transcriptional activator RhaR from Salmonella schwarzengrund (strain CVM19633).